Reading from the N-terminus, the 476-residue chain is UPF0481 protein At3g47200 (476 aa).

The interval 1-24 (MADKTDIISSSSDKASPPPPSAFR) is disordered. 2 helical membrane-spanning segments follow: residues 133–153 (LMFMMVLDGCFILMVFLIMSG) and 439–459 (AVLFVILLTMLQSTVAILSYL).

The protein belongs to the UPF0481 family.

It is found in the membrane. This chain is UPF0481 protein At3g47200, found in Arabidopsis thaliana (Mouse-ear cress).